Consider the following 596-residue polypeptide: Uptake hydrogenase large subunit (596 aa).

Ni(2+) is bound by residues cysteine 75, cysteine 78, cysteine 575, and cysteine 578.

The protein belongs to the [NiFe]/[NiFeSe] hydrogenase large subunit family. In terms of assembly, heterodimer of a large and a small subunit. The cofactor is Ni(2+).

It is found in the cell membrane. The catalysed reaction is H2 + A = AH2. In terms of biological role, this enzyme recycles the H(2) produced by nitrogenase to increase the production of ATP and to protect nitrogenase against inhibition or damage by O(2) under carbon- or phosphate-limited conditions. This is Uptake hydrogenase large subunit (hupB) from Rhizobium leguminosarum bv. viciae.